Consider the following 449-residue polypeptide: Procollagen C-endopeptidase enhancer 1 (449 aa).

The first 25 residues, 1 to 25, serve as a signal peptide directing secretion; that stretch reads MLPAATASLLGPLLTACALLPFAQG. Residue N29 is glycosylated (N-linked (GlcNAc...) asparagine). Cystine bridges form between C37-C63, C90-C112, C159-C186, C213-C236, C318-C386, C322-C389, and C333-C437. 2 consecutive CUB domains span residues 37–149 and 159–273; these read CGGD…YSGR and CGGR…YKTL. At S50 the chain carries Phosphoserine. Residues 271 to 321 form a disordered region; it reads KTLPRGTAKEGQGPGPKRGTEPKVKLPPKSQPPEKTEESPSAPDAPTCPKQ. In terms of domain architecture, NTR spans 318-437; sequence CPKQCRRTGT…ILTNLSKRKC (120 aa). The N-linked (GlcNAc...) asparagine glycan is linked to N431.

In terms of assembly, interacts with EFEMP2. In terms of processing, C-terminally processed at multiple positions.

Its subcellular location is the secreted. Its function is as follows. Binds to the C-terminal propeptide of type I procollagen and enhances procollagen C-proteinase activity. Functionally, C-terminal processed part of PCPE (CT-PCPE) may have an metalloproteinase inhibitory activity. The sequence is that of Procollagen C-endopeptidase enhancer 1 (PCOLCE) from Homo sapiens (Human).